The sequence spans 944 residues: DNA ligase 4 (944 aa).

ATP is bound by residues E280, K282, R287, E340, F382, E442, K447, K464, and K466. The N6-AMP-lysine intermediate role is filled by K282. E340 is a Mg(2+) binding site. E442 is a Mg(2+) binding site. BRCT domains lie at 681–780 and 836–941; these read PISN…PNYC and FPLF…DFPV.

This sequence belongs to the ATP-dependent DNA ligase family. As to quaternary structure, component of the DNA ligase IV complex, composed of DNL4, LIF1 and NEJ1. Interacts (via BRCT domain) with LIF1. Interacts with NEJ1. Interacts with POL4 in the DNL4-LIF1 complex. Mg(2+) serves as cofactor.

It is found in the nucleus. The catalysed reaction is ATP + (deoxyribonucleotide)n-3'-hydroxyl + 5'-phospho-(deoxyribonucleotide)m = (deoxyribonucleotide)n+m + AMP + diphosphate.. Functionally, DNA ligase involved in DNA non-homologous end joining (NHEJ); required for double-strand break (DSB) repair. The chain is DNA ligase 4 (DNL4) from Saccharomyces cerevisiae (strain ATCC 204508 / S288c) (Baker's yeast).